We begin with the raw amino-acid sequence, 397 residues long: Ornithine aminotransferase (397 aa).

N6-(pyridoxal phosphate)lysine is present on K255.

The protein belongs to the class-III pyridoxal-phosphate-dependent aminotransferase family. OAT subfamily. Requires pyridoxal 5'-phosphate as cofactor.

It is found in the cytoplasm. The enzyme catalyses a 2-oxocarboxylate + L-ornithine = L-glutamate 5-semialdehyde + an L-alpha-amino acid. It functions in the pathway amino-acid biosynthesis; L-proline biosynthesis; L-glutamate 5-semialdehyde from L-ornithine: step 1/1. In terms of biological role, catalyzes the interconversion of ornithine to glutamate semialdehyde. This chain is Ornithine aminotransferase, found in Macrococcus caseolyticus (strain JCSC5402) (Macrococcoides caseolyticum).